The chain runs to 341 residues: Phenylalanine--tRNA ligase alpha subunit (341 aa).

Residue Glu252 participates in Mg(2+) binding.

This sequence belongs to the class-II aminoacyl-tRNA synthetase family. Phe-tRNA synthetase alpha subunit type 1 subfamily. Tetramer of two alpha and two beta subunits. Requires Mg(2+) as cofactor.

The protein localises to the cytoplasm. The enzyme catalyses tRNA(Phe) + L-phenylalanine + ATP = L-phenylalanyl-tRNA(Phe) + AMP + diphosphate + H(+). The polypeptide is Phenylalanine--tRNA ligase alpha subunit (Malacoplasma penetrans (strain HF-2) (Mycoplasma penetrans)).